Consider the following 306-residue polypeptide: Secretory carrier-associated membrane protein 1 (306 aa).

Residues 1–66 form a disordered region; that stretch reads MAGRYDSNPF…LPPEPAAFGA (66 aa). The Cytoplasmic segment spans residues 1 to 141; that stretch reads MAGRYDSNPF…EIPSHLQRMQ (141 aa). The span at 25–36 shows a compositional bias: gly residues; it reads KAGGQPSYGGGA. A compositionally biased stretch (low complexity) spans 40–55; sequence PNPRNVPSVSSNSRLS. Positions 72-109 form a coiled coil; it reads LDSSKDLKNREKELQAREAELNKREKELKRREEAAARA. The next 4 membrane-spanning stretches (helical) occupy residues 142 to 162, 174 to 194, 209 to 229, and 257 to 277; these read YVAF…VIAV, IWLL…VLWY, FGLF…SAVA, and IFYF…IWVI. At 278–306 the chain is on the cytoplasmic side; that stretch reads QQVYMYFRGSGKAAEMKRDATRGAMRAAF.

This sequence belongs to the SCAMP family.

The protein resides in the cell membrane. It localises to the cytoplasmic vesicle. Its subcellular location is the secretory vesicle membrane. Its function is as follows. Probably involved in membrane trafficking. The protein is Secretory carrier-associated membrane protein 1 (SCAMP1) of Oryza sativa subsp. japonica (Rice).